Reading from the N-terminus, the 175-residue chain is Ribosome maturation factor RimM (175 aa).

The PRC barrel domain maps to 95 to 175 (EEGDYYWHDL…TITVDWDAGF (81 aa)).

This sequence belongs to the RimM family. Binds ribosomal protein uS19.

The protein localises to the cytoplasm. In terms of biological role, an accessory protein needed during the final step in the assembly of 30S ribosomal subunit, possibly for assembly of the head region. Essential for efficient processing of 16S rRNA. May be needed both before and after RbfA during the maturation of 16S rRNA. It has affinity for free ribosomal 30S subunits but not for 70S ribosomes. This is Ribosome maturation factor RimM from Glaesserella parasuis serovar 5 (strain SH0165) (Haemophilus parasuis).